The sequence spans 951 residues: Metal transporter CNNM1 (951 aa).

A helical membrane pass occupies residues 23–43 (AVLLLFFSLSPRPPAAAAWLL). A disordered region spans residues 116–135 (GGVAPSAVPTRPPGPQRCRE). The CNNM transmembrane domain maps to 218–414 (LLPPAWLRAL…DPYSDLVKEE (197 aa)). The next 3 helical transmembrane spans lie at 222 to 242 (AWLRALGALLLLALSALFSGL), 282 to 302 (LLCTLLLGQAGANAALAGWLY), and 321 to 341 (IHFPWLPALVCTGAVFLGAEI). 2 CBS domains span residues 433 to 495 (LTPL…CTPL) and 502 to 568 (YNRP…ILDE). Composition is skewed to polar residues over residues 731–740 (SRCSGLNRSE) and 814–824 (KAPTTRGTPQT). Disordered stretches follow at residues 731–753 (SRCSGLNRSESPNRERSDFGGSN) and 795–830 (MDSSPQSPDMEAFTDGDSTKAPTTRGTPQTPKDDPA). Phosphothreonine is present on residues T821 and T824. Position 850 is a phosphoserine (S850). The disordered stretch occupies residues 920–951 (KLLRTLSGQKRKRSPEGERTSEDNSNLTPLIT). Positions 942–951 (DNSNLTPLIT) are enriched in polar residues.

It belongs to the ACDP family. As to expression, restricted to brain and testis.

The protein resides in the cell membrane. Functionally, probable metal transporter. This Homo sapiens (Human) protein is Metal transporter CNNM1 (CNNM1).